The following is a 187-amino-acid chain: ATP synthase subunit b (187 aa).

The helical transmembrane segment at 31 to 51 threads the bilayer; it reads VAIMGLAIFVLFLILSYLLFN.

It belongs to the ATPase B chain family. As to quaternary structure, F-type ATPases have 2 components, F(1) - the catalytic core - and F(0) - the membrane proton channel. F(1) has five subunits: alpha(3), beta(3), gamma(1), delta(1), epsilon(1). F(0) has three main subunits: a(1), b(2) and c(10-14). The alpha and beta chains form an alternating ring which encloses part of the gamma chain. F(1) is attached to F(0) by a central stalk formed by the gamma and epsilon chains, while a peripheral stalk is formed by the delta and b chains.

Its subcellular location is the cell membrane. In terms of biological role, f(1)F(0) ATP synthase produces ATP from ADP in the presence of a proton or sodium gradient. F-type ATPases consist of two structural domains, F(1) containing the extramembraneous catalytic core and F(0) containing the membrane proton channel, linked together by a central stalk and a peripheral stalk. During catalysis, ATP synthesis in the catalytic domain of F(1) is coupled via a rotary mechanism of the central stalk subunits to proton translocation. Component of the F(0) channel, it forms part of the peripheral stalk, linking F(1) to F(0). In Lachnoclostridium phytofermentans (strain ATCC 700394 / DSM 18823 / ISDg) (Clostridium phytofermentans), this protein is ATP synthase subunit b.